The following is a 219-amino-acid chain: Probable GTP-binding protein EngB (219 aa).

The EngB-type G domain maps to 31 to 205; the sequence is VGVEIAFAGR…LSILNEWCHP (175 aa). Residues 39–46, 66–70, 84–87, 151–154, and 184–186 contribute to the GTP site; these read GRSNAGKS, GRTQL, DLPG, TKSD, and FSA. The Mg(2+) site is built by S46 and T68.

This sequence belongs to the TRAFAC class TrmE-Era-EngA-EngB-Septin-like GTPase superfamily. EngB GTPase family. Mg(2+) is required as a cofactor.

Its function is as follows. Necessary for normal cell division and for the maintenance of normal septation. In Shewanella sp. (strain MR-7), this protein is Probable GTP-binding protein EngB.